The primary structure comprises 181 residues: MTEYEGPKTKFHALMQEQIHNEFTAAQQYVAIAVYFDSEDLPQLAKHFYSQAVEERNHAMMLVQHLLDRDLRVEIPGVDTVRNQFDRPREALALALDQERTVTDQVGRLTAVARDEGDFLGEQFMQWFLQEQIEEVALMATLVRVADRAGANLFELENFVAREVDVAPAASGAPHAAGGRL.

The 136-residue stretch at 15 to 150 (MQEQIHNEFT…TLVRVADRAG (136 aa)) folds into the Ferritin-like diiron domain. Fe cation is bound by residues Glu22, Glu55, His58, Glu99, and Gln132.

The protein belongs to the ferritin family. Prokaryotic subfamily. In terms of assembly, homooligomer of 24 subunits that are packed together to form an approximately spherical molecule with a central cavity, in which large amounts of iron can be stored.

It carries out the reaction 4 Fe(2+) + O2 + 4 H(+) = 4 Fe(3+) + 2 H2O. Iron-storage protein that displays ferroxidase activity, catalyzing the oxidation of Fe(2+) ions into Fe(3+) ions, that can then be deposited as a ferric-oxide mineral core within the central cavity of the protein complex. The sequence is that of Ferritin BfrB (bfrB) from Mycobacterium tuberculosis (strain ATCC 35801 / TMC 107 / Erdman).